A 595-amino-acid polypeptide reads, in one-letter code: Pectinesterase 5 (595 aa).

The signal sequence occupies residues 1 to 24 (MIGKVVVSVASILLIVGVAIGVVA). 2 N-linked (GlcNAc...) asparagine glycosylation sites follow: asparagine 86 and asparagine 206. The tract at residues 215–239 (SDKGAAPVNKGTPPVADDSPVADPD) is disordered. Residues 227–239 (PPVADDSPVADPD) are compositionally biased toward low complexity. The RRLL cleavage motif motif lies at 243 to 246 (RRLL). Positions 263–266 (RKLM) match the RKLM cleavage motif motif. The N-linked (GlcNAc...) asparagine glycan is linked to asparagine 349. Threonine 360 and glutamine 390 together coordinate substrate. Aspartate 413 serves as the catalytic Proton donor. Aspartate 434 acts as the Nucleophile in catalysis. 2 residues coordinate substrate: arginine 503 and tryptophan 505.

It in the N-terminal section; belongs to the PMEI family. The protein in the C-terminal section; belongs to the pectinesterase family. Interacts with SBT6.1. In terms of tissue distribution, expressed in pollen grains and pollen tubes.

It is found in the cell membrane. It localises to the secreted. The protein resides in the cell wall. The protein localises to the golgi apparatus membrane. It carries out the reaction [(1-&gt;4)-alpha-D-galacturonosyl methyl ester](n) + n H2O = [(1-&gt;4)-alpha-D-galacturonosyl](n) + n methanol + n H(+). Its pathway is glycan metabolism; pectin degradation; 2-dehydro-3-deoxy-D-gluconate from pectin: step 1/5. Acts in the modification of cell walls via demethylesterification of cell wall pectin. Plays an important role in growth of pollen tubes in female floral tissues, possibly via enhancing the interaction between the pollen tube and female floral tissues by modification of the cell walls. May be regulated by MYB80 during anther development and play a role in tapetum and pollen development. In Arabidopsis thaliana (Mouse-ear cress), this protein is Pectinesterase 5 (PME5).